A 160-amino-acid polypeptide reads, in one-letter code: Transcription antitermination protein NusB (160 aa).

The protein belongs to the NusB family.

Its function is as follows. Involved in transcription antitermination. Required for transcription of ribosomal RNA (rRNA) genes. Binds specifically to the boxA antiterminator sequence of the ribosomal RNA (rrn) operons. This is Transcription antitermination protein NusB from Salinibacter ruber (strain DSM 13855 / M31).